A 947-amino-acid chain; its full sequence is MSSALLEEVGWDADFAIPVANAENKALEEQIRKKQKDILNLDNKLNKHKDVINALTEHLKNLKQEVSHNQALCKAKEKETESEVHLKALAERETGRLKQEITRLESQLTTLNEKKNAQENSIFKATQKIDELTSQLNWDQQTLEAFLQESAHKDEDTMAIIKYAKQDERKIKELTLNIEKLTLESNQKRKTLDNELTETVTSQIALDKTAESFRQAHTERQELISQWENTIEQMRKRDQDIQQCAMMLAELNQTIREKNDLIKERKDFLEREIENNKELERNIGTVERQAFRLRQQLQEEEKNQRRLQDEVEVLKGTVDRTATDVETSRSQLSSMKKDIQDKTTKVEEAQLHNAALEEKLRMVTEAVLNGEEQAAQMEQLLREQEQNIKEIDSQLLRQKELLFKKSQEVQALRDKEKNVTAEICATRTALSNLDSKLRKLDQNFLQQQMIISNQDFQIQMLERKTLHLQGKVNTEEKKALEKKVADLAASLEEKKKTAANLNKQLKKLQDDIRCIKKDTEKIGAEKTNLSTKIQEVELFIETSEKERKKSRLKKQDSMVEKGLLKMEVQRLRNLLYDRADGVLTLEKRRLQLQTAMKEREEEIRVHREMLNKQVKLTEQERQGLSAAVNEAMSKIDKQRKRYEVLSVSLAPPEGEEDKSQAYFIIKAAQEKEELQRKGDELDAKIRKTEKEIHALENTLQVVNNCNSTHRKALTKVTESSPAHQEKLKLEEQRRAAEEKYKYKRRQTQELQEDIESMSNTLEGLLQEEKVLNEGIERTQAHVLSLNKDILSQEEKINRAVKQCAKYTKEIRSGKQSTEKTFEERDIELRELRDFNKSINKMLLDAMEGNPELSSILQIHFTQAGLSLPSPSSTPSSRLSSKPSSARSSASLHRSSNLSASSSPRSQSVSSPQMKTVDLGLGLSVTSPRGSQPSSAGSSRSSSKCKSP.

4 coiled-coil regions span residues 16–194, 221–402, 471–522, and 582–813; these read AIPV…TLDN, QELI…KELL, KVNT…TEKI, and VLTL…IRSG. Low complexity-rich tracts occupy residues 866–911 and 926–947; these read SLPS…VSSP and SPRGSQPSSAGSSRSSSKCKSP. A disordered region spans residues 866-947; the sequence is SLPSPSSTPS…SRSSSKCKSP (82 aa).

This sequence belongs to the CCDC39 family.

The protein localises to the cytoplasm. It localises to the cytoskeleton. Its subcellular location is the cilium axoneme. Functionally, required for assembly of dynein regulatory complex (DRC) and inner dynein arm (IDA) complexes, which are responsible for ciliary beat regulation, thereby playing a central role in motility in cilia and flagella. Probably acts together with ccdc40 to form a molecular ruler that determines the 96 nanometer (nm) repeat length and arrangements of components in cilia and flagella. Not required for outer dynein arm complexes assembly. The chain is Coiled-coil domain-containing protein 39 (ccdc39) from Danio rerio (Zebrafish).